The primary structure comprises 229 residues: 5'-methylthioadenosine/S-adenosylhomocysteine nucleosidase (229 aa).

Residue E12 is the Proton acceptor of the active site. Substrate-binding positions include G78, I152, and 173-174 (ME). D197 acts as the Proton donor in catalysis.

The protein belongs to the PNP/UDP phosphorylase family. MtnN subfamily.

The catalysed reaction is S-adenosyl-L-homocysteine + H2O = S-(5-deoxy-D-ribos-5-yl)-L-homocysteine + adenine. It carries out the reaction S-methyl-5'-thioadenosine + H2O = 5-(methylsulfanyl)-D-ribose + adenine. The enzyme catalyses 5'-deoxyadenosine + H2O = 5-deoxy-D-ribose + adenine. The protein operates within amino-acid biosynthesis; L-methionine biosynthesis via salvage pathway; S-methyl-5-thio-alpha-D-ribose 1-phosphate from S-methyl-5'-thioadenosine (hydrolase route): step 1/2. Its function is as follows. Catalyzes the irreversible cleavage of the glycosidic bond in both 5'-methylthioadenosine (MTA) and S-adenosylhomocysteine (SAH/AdoHcy) to adenine and the corresponding thioribose, 5'-methylthioribose and S-ribosylhomocysteine, respectively. Also cleaves 5'-deoxyadenosine, a toxic by-product of radical S-adenosylmethionine (SAM) enzymes, into 5-deoxyribose and adenine. The chain is 5'-methylthioadenosine/S-adenosylhomocysteine nucleosidase from Haemophilus influenzae (strain PittEE).